Consider the following 102-residue polypeptide: NADH-quinone oxidoreductase subunit K (102 aa).

A run of 3 helical transmembrane segments spans residues 6 to 26 (LIGI…GVLA), 30 to 50 (MLFQ…GFIA), and 63 to 83 (MFIL…ALFL).

This sequence belongs to the complex I subunit 4L family. In terms of assembly, NDH-1 is composed of 14 different subunits. Subunits NuoA, H, J, K, L, M, N constitute the membrane sector of the complex.

The protein resides in the cell inner membrane. The catalysed reaction is a quinone + NADH + 5 H(+)(in) = a quinol + NAD(+) + 4 H(+)(out). NDH-1 shuttles electrons from NADH, via FMN and iron-sulfur (Fe-S) centers, to quinones in the respiratory chain. The immediate electron acceptor for the enzyme in this species is believed to be ubiquinone. Couples the redox reaction to proton translocation (for every two electrons transferred, four hydrogen ions are translocated across the cytoplasmic membrane), and thus conserves the redox energy in a proton gradient. The polypeptide is NADH-quinone oxidoreductase subunit K (Rhodopseudomonas palustris (strain TIE-1)).